The chain runs to 492 residues: Argininosuccinate lyase (492 aa).

This sequence belongs to the lyase 1 family. Argininosuccinate lyase subfamily.

It is found in the cytoplasm. It catalyses the reaction 2-(N(omega)-L-arginino)succinate = fumarate + L-arginine. Its pathway is amino-acid biosynthesis; L-arginine biosynthesis; L-arginine from L-ornithine and carbamoyl phosphate: step 3/3. The chain is Argininosuccinate lyase from Methanoculleus marisnigri (strain ATCC 35101 / DSM 1498 / JR1).